Here is a 454-residue protein sequence, read N- to C-terminus: Putative serine/threonine-protein phosphatase C27B7.6 (454 aa).

Mn(2+)-binding residues include D65, H67, D93, and N125. Catalysis depends on H126, which acts as the Proton donor. The Mn(2+) site is built by H174 and H252. The segment at 414–454 (RKKLGMTTSTTPPPPRTPSPDAPLAQSPPIPRSPPSSTENA) is disordered. The segment covering 424–447 (TPPPPRTPSPDAPLAQSPPIPRSP) has biased composition (pro residues).

It belongs to the PPP phosphatase family. PP-1 subfamily. Requires Mn(2+) as cofactor.

It catalyses the reaction O-phospho-L-seryl-[protein] + H2O = L-seryl-[protein] + phosphate. It carries out the reaction O-phospho-L-threonyl-[protein] + H2O = L-threonyl-[protein] + phosphate. The polypeptide is Putative serine/threonine-protein phosphatase C27B7.6 (Caenorhabditis elegans).